Reading from the N-terminus, the 154-residue chain is Putative pre-16S rRNA nuclease (154 aa).

It belongs to the YqgF nuclease family.

It is found in the cytoplasm. In terms of biological role, could be a nuclease involved in processing of the 5'-end of pre-16S rRNA. This chain is Putative pre-16S rRNA nuclease, found in Pelotomaculum thermopropionicum (strain DSM 13744 / JCM 10971 / SI).